We begin with the raw amino-acid sequence, 502 residues long: RxLR effector protein BLN06 (502 aa).

Positions 1–20 (MTLLHCWLLLVGHLASTAYA) are cleaved as a signal peptide. Asparagine 38 is a glycosylation site (N-linked (GlcNAc...) asparagine). Positions 50–53 (LEER) match the dEER motif.

Belongs to the RxLR effector family.

The protein resides in the secreted. It localises to the host cell membrane. Secreted effector that triggers a robust hypersensitive response (HR) in Lactuca serriola LS102. The response to BLN06 was visible as chlorosis but not as strong necrosis. This chain is RxLR effector protein BLN06, found in Bremia lactucae (Lettuce downy mildew).